Reading from the N-terminus, the 266-residue chain is Nus factor SuhB (266 aa).

Substrate is bound at residue 86–89; sequence LDGI.

It belongs to the inositol monophosphatase superfamily. As to quaternary structure, homodimer. The rRNA transcription and antitermination complex (rrnTAC) consists of RNA polymerase (RNAP), NusA, NusB, NusE (rpsJ), NusG, SubB, ribosomal protein S4, DNA and precursor rRNA; S4 is more flexible than other subunits. Mg(2+) is required as a cofactor.

The protein localises to the cytoplasm. The enzyme catalyses a myo-inositol phosphate + H2O = myo-inositol + phosphate. Functionally, part of the processive rRNA transcription and antitermination complex (rrnTAC). The complex forms an RNA-chaperone ring around the RNA exit tunnel of RNA polymerase (RNAP). It supports rapid transcription and antitermination of rRNA operons, cotranscriptional rRNA folding, and annealing of distal rRNA regions to allow correct ribosome biogenesis. This subunit may play a central role in organizing the structure. In Buchnera aphidicola subsp. Baizongia pistaciae (strain Bp), this protein is Nus factor SuhB (suhB).